A 413-amino-acid chain; its full sequence is 1-deoxy-D-xylulose 5-phosphate reductoisomerase (413 aa).

Positions 21, 22, 23, 24, 47, and 127 each coordinate NADPH. 1-deoxy-D-xylulose 5-phosphate is bound at residue K128. E129 is a binding site for NADPH. D151 is a Mn(2+) binding site. Residues S152, E153, S177, and H200 each contribute to the 1-deoxy-D-xylulose 5-phosphate site. E153 contributes to the Mn(2+) binding site. G206 contributes to the NADPH binding site. Positions 213, 218, 219, and 222 each coordinate 1-deoxy-D-xylulose 5-phosphate. E222 lines the Mn(2+) pocket.

It belongs to the DXR family. The cofactor is Mg(2+). It depends on Mn(2+) as a cofactor.

It carries out the reaction 2-C-methyl-D-erythritol 4-phosphate + NADP(+) = 1-deoxy-D-xylulose 5-phosphate + NADPH + H(+). The protein operates within isoprenoid biosynthesis; isopentenyl diphosphate biosynthesis via DXP pathway; isopentenyl diphosphate from 1-deoxy-D-xylulose 5-phosphate: step 1/6. Its function is as follows. Catalyzes the NADPH-dependent rearrangement and reduction of 1-deoxy-D-xylulose-5-phosphate (DXP) to 2-C-methyl-D-erythritol 4-phosphate (MEP). The sequence is that of 1-deoxy-D-xylulose 5-phosphate reductoisomerase from Mycobacterium bovis (strain ATCC BAA-935 / AF2122/97).